Consider the following 177-residue polypeptide: Large ribosomal subunit protein uL6 (177 aa).

The protein belongs to the universal ribosomal protein uL6 family. In terms of assembly, part of the 50S ribosomal subunit.

Functionally, this protein binds to the 23S rRNA, and is important in its secondary structure. It is located near the subunit interface in the base of the L7/L12 stalk, and near the tRNA binding site of the peptidyltransferase center. The polypeptide is Large ribosomal subunit protein uL6 (Bradyrhizobium sp. (strain ORS 278)).